An 87-amino-acid polypeptide reads, in one-letter code: Protein WFDC11 (87 aa).

The signal sequence occupies residues 1 to 25 (MVSLMKLWIPMLMTFFCTVLLSVLG).

Its subcellular location is the secreted. This chain is Protein WFDC11 (WFDC11), found in Homo sapiens (Human).